Reading from the N-terminus, the 120-residue chain is UPF0231 protein YacL (120 aa).

This sequence belongs to the UPF0231 family.

The chain is UPF0231 protein YacL from Escherichia coli O81 (strain ED1a).